We begin with the raw amino-acid sequence, 157 residues long: Small ribosomal subunit protein uS7 (157 aa).

The protein belongs to the universal ribosomal protein uS7 family. In terms of assembly, part of the 30S ribosomal subunit. Contacts proteins S9 and S11.

In terms of biological role, one of the primary rRNA binding proteins, it binds directly to 16S rRNA where it nucleates assembly of the head domain of the 30S subunit. Is located at the subunit interface close to the decoding center, probably blocks exit of the E-site tRNA. The protein is Small ribosomal subunit protein uS7 of Chloroflexus aurantiacus (strain ATCC 29366 / DSM 635 / J-10-fl).